Consider the following 420-residue polypeptide: UDP-glucuronic acid decarboxylase 1 (420 aa).

Position 1 is an N-acetylmethionine (Met1). The Cytoplasmic portion of the chain corresponds to 1–19 (MVSKGLLRLVSSVNRRRMK). A helical; Signal-anchor for type II membrane protein transmembrane segment spans residues 20–40 (LLLGIALFAYAASVWGNFVNM). Residues 41-420 (RSIQENGELK…RVKKGRTRHS (380 aa)) are Lumenal-facing. Thr94 carries the post-translational modification Phosphothreonine. The NAD(+) site is built by Gly98, Phe99, Val100, Asp119, Asn120, Phe122, Thr123, Gly124, Asp144, and Val145. UDP-alpha-D-glucuronate-binding residues include Leu149 and Tyr150. NAD(+) contacts are provided by Leu159 and Ser161. Lys177 is a binding site for UDP-alpha-D-glucuronate. Position 178 (Thr178) interacts with NAD(+). UDP-alpha-D-glucuronate is bound by residues Asn185, Gly188, Lys191, and Arg192. 3 residues coordinate NAD(+): Ala200, Tyr231, and Lys235. The Proton acceptor role is filled by Tyr231. The UDP-alpha-D-glucuronate site is built by Tyr245, Gln248, and Glu249. NAD(+)-binding residues include Thr261, His267, and Arg272. N-linked (GlcNAc...) asparagine glycosylation is present at Asn316.

The protein belongs to the NAD(P)-dependent epimerase/dehydratase family. UDP-glucuronic acid decarboxylase subfamily. In terms of assembly, homodimer and homotetramer. Interacts with AKT1. Requires NAD(+) as cofactor.

The protein localises to the golgi apparatus. The protein resides in the golgi stack membrane. The enzyme catalyses UDP-alpha-D-glucuronate + H(+) = UDP-alpha-D-xylose + CO2. Its pathway is nucleotide-sugar biosynthesis; UDP-alpha-D-xylose biosynthesis; UDP-alpha-D-xylose from UDP-alpha-D-glucuronate: step 1/1. Catalyzes the NAD-dependent decarboxylation of UDP-glucuronic acid to UDP-xylose. Necessary for the biosynthesis of the core tetrasaccharide in glycosaminoglycan biosynthesis. This Mus musculus (Mouse) protein is UDP-glucuronic acid decarboxylase 1 (Uxs1).